The sequence spans 167 residues: NAD(P)H-quinone oxidoreductase subunit I, chloroplastic (167 aa).

2 consecutive 4Fe-4S ferredoxin-type domains span residues 55–84 and 95–124; these read GRIHFEFDKCIACEVCVRVCPIDLPVVDWK and LNYSIDFGICIFCGNCVEYCPTNCLSMTEE. C64, C67, C70, C74, C104, C107, C110, and C114 together coordinate [4Fe-4S] cluster.

This sequence belongs to the complex I 23 kDa subunit family. In terms of assembly, NDH is composed of at least 16 different subunits, 5 of which are encoded in the nucleus. [4Fe-4S] cluster is required as a cofactor.

Its subcellular location is the plastid. It localises to the chloroplast thylakoid membrane. The catalysed reaction is a plastoquinone + NADH + (n+1) H(+)(in) = a plastoquinol + NAD(+) + n H(+)(out). It catalyses the reaction a plastoquinone + NADPH + (n+1) H(+)(in) = a plastoquinol + NADP(+) + n H(+)(out). Functionally, NDH shuttles electrons from NAD(P)H:plastoquinone, via FMN and iron-sulfur (Fe-S) centers, to quinones in the photosynthetic chain and possibly in a chloroplast respiratory chain. The immediate electron acceptor for the enzyme in this species is believed to be plastoquinone. Couples the redox reaction to proton translocation, and thus conserves the redox energy in a proton gradient. The chain is NAD(P)H-quinone oxidoreductase subunit I, chloroplastic from Draba nemorosa (Woodland whitlowgrass).